Here is a 162-residue protein sequence, read N- to C-terminus: Caveolin-2 (162 aa).

Topologically, residues Met1–Lys86 are cytoplasmic. Tyr19 bears the Phosphotyrosine; by SRC mark. 2 positions are modified to phosphoserine: Ser20 and Ser23. Tyr27 carries the phosphotyrosine; by SRC modification. Ser36 bears the Phosphoserine mark. Residues Phe87–Leu107 constitute an intramembrane region (helical). Topologically, residues Ser108–Asp162 are cytoplasmic.

This sequence belongs to the caveolin family. In terms of assembly, monomer or homodimer. Interacts with CAV1; the interaction forms a stable heterooligomeric complex that is required for targeting to lipid rafts and for caveolae formation. Tyrosine phosphorylated forms do not form heterooligomers with the Tyr-19-phosphorylated form existing as a monomer or dimer, and the Tyr-27-form as a monomer only. Interacts (tyrosine phosphorylated form) with the SH2 domain-containing proteins, RASA1, NCK1 and SRC. Interacts (tyrosine phosphorylated form) with INSR, the interaction (Tyr-27-phosphorylated form) is increased on insulin stimulation. Interacts (Tyr-19 phosphorylated form) with MAPK1 (phosphorylated form); the interaction, promoted by insulin, leads to nuclear location and MAPK1 activation. Interacts with STAT3; the interaction is increased on insulin-induced tyrosine phosphorylation leading to STAT activation. Phosphorylated on serine and tyrosine residues. CAV1 promotes phosphorylation on Ser-23 which then targets the complex to the plasma membrane, lipid rafts and caveolae. Phosphorylation on Ser-36 appears to modulate mitosis in endothelial cells. Phosphorylation on both Tyr-19 and Tyr-27 is required for insulin-induced 'Ser-727' phosphorylation of STAT3 and its activation. Phosphorylation on Tyr-19 is required for insulin-induced phosphorylation of MAPK1 and DNA binding of STAT3. Tyrosine phosphorylation is induced by both EGF and insulin (By. similarity).

The protein localises to the nucleus. The protein resides in the cytoplasm. It is found in the golgi apparatus membrane. It localises to the cell membrane. Its subcellular location is the membrane. The protein localises to the caveola. Its function is as follows. May act as a scaffolding protein within caveolar membranes. Interacts directly with G-protein alpha subunits and can functionally regulate their activity. Acts as an accessory protein in conjunction with CAV1 in targeting to lipid rafts and driving caveolae formation. The Ser-36 phosphorylated form has a role in modulating mitosis in endothelial cells. Positive regulator of cellular mitogenesis of the MAPK signaling pathway. Required for the insulin-stimulated nuclear translocation and activation of MAPK1 and STAT3, and the subsequent regulation of cell cycle progression. This Neofelis nebulosa (Clouded leopard) protein is Caveolin-2 (CAV2).